The primary structure comprises 287 residues: NH(3)-dependent NAD(+) synthetase (287 aa).

53–60 serves as a coordination point for ATP; it reads GISGGQDS. Asp59 is a Mg(2+) binding site. Arg146 serves as a coordination point for deamido-NAD(+). Thr166 lines the ATP pocket. Glu171 contributes to the Mg(2+) binding site. 2 residues coordinate deamido-NAD(+): Lys179 and Asp186. The ATP site is built by Lys195 and Thr217. 266-267 lines the deamido-NAD(+) pocket; that stretch reads HK.

The protein belongs to the NAD synthetase family. In terms of assembly, homodimer.

It catalyses the reaction deamido-NAD(+) + NH4(+) + ATP = AMP + diphosphate + NAD(+) + H(+). The protein operates within cofactor biosynthesis; NAD(+) biosynthesis; NAD(+) from deamido-NAD(+) (ammonia route): step 1/1. Functionally, catalyzes the ATP-dependent amidation of deamido-NAD to form NAD. Uses ammonia as a nitrogen source. The sequence is that of NH(3)-dependent NAD(+) synthetase from Deinococcus radiodurans (strain ATCC 13939 / DSM 20539 / JCM 16871 / CCUG 27074 / LMG 4051 / NBRC 15346 / NCIMB 9279 / VKM B-1422 / R1).